The primary structure comprises 348 residues: Probable dual-specificity RNA methyltransferase RlmN (348 aa).

Glu95 acts as the Proton acceptor in catalysis. The region spanning 101 to 335 (SGNRLTICVS…VSLRASRGLD (235 aa)) is the Radical SAM core domain. Cys108 and Cys340 are oxidised to a cystine. Residues Cys115, Cys119, and Cys122 each coordinate [4Fe-4S] cluster. S-adenosyl-L-methionine is bound by residues 162 to 163 (GE), Ser192, 221 to 223 (SLH), and Asn297. Catalysis depends on Cys340, which acts as the S-methylcysteine intermediate.

It belongs to the radical SAM superfamily. RlmN family. It depends on [4Fe-4S] cluster as a cofactor.

Its subcellular location is the cytoplasm. It carries out the reaction adenosine(2503) in 23S rRNA + 2 reduced [2Fe-2S]-[ferredoxin] + 2 S-adenosyl-L-methionine = 2-methyladenosine(2503) in 23S rRNA + 5'-deoxyadenosine + L-methionine + 2 oxidized [2Fe-2S]-[ferredoxin] + S-adenosyl-L-homocysteine. The enzyme catalyses adenosine(37) in tRNA + 2 reduced [2Fe-2S]-[ferredoxin] + 2 S-adenosyl-L-methionine = 2-methyladenosine(37) in tRNA + 5'-deoxyadenosine + L-methionine + 2 oxidized [2Fe-2S]-[ferredoxin] + S-adenosyl-L-homocysteine. Specifically methylates position 2 of adenine 2503 in 23S rRNA and position 2 of adenine 37 in tRNAs. The chain is Probable dual-specificity RNA methyltransferase RlmN from Prochlorococcus marinus (strain SARG / CCMP1375 / SS120).